The sequence spans 623 residues: Putative ABC transporter ATP-binding protein MG014 (623 aa).

The ABC transmembrane type-1 domain occupies 16-325; sequence LILAPFFTFA…YIVLGFILTS (310 aa). 6 helical membrane-spanning segments follow: residues 27–47, 81–101, 157–177, 181–201, 266–286, and 307–327; these read IVID…VFSI, VLAT…LISI, FLRL…FAVT, DMSI…GILN, NIPF…LLVF, and IFAF…TSLT. In terms of domain architecture, ABC transporter spans 365–611; sequence LEFRNISFGL…CSLYQKMKES (247 aa). 400–407 contacts ATP; it reads GPTGSGKS.

Belongs to the ABC transporter superfamily.

Its subcellular location is the cell membrane. The chain is Putative ABC transporter ATP-binding protein MG014 from Mycoplasma genitalium (strain ATCC 33530 / DSM 19775 / NCTC 10195 / G37) (Mycoplasmoides genitalium).